Reading from the N-terminus, the 342-residue chain is Farnesyl pyrophosphate synthase 1 (342 aa).

Isopentenyl diphosphate-binding residues include Lys-47, Arg-50, and Gln-86. 2 residues coordinate Mg(2+): Asp-93 and Asp-97. Arg-102 lines the dimethylallyl diphosphate pocket. Residue Arg-103 participates in isopentenyl diphosphate binding. Positions 190, 191, 229, 246, and 255 each coordinate dimethylallyl diphosphate.

It belongs to the FPP/GGPP synthase family. Requires Mg(2+) as cofactor.

The protein resides in the cytoplasm. It catalyses the reaction isopentenyl diphosphate + dimethylallyl diphosphate = (2E)-geranyl diphosphate + diphosphate. The enzyme catalyses isopentenyl diphosphate + (2E)-geranyl diphosphate = (2E,6E)-farnesyl diphosphate + diphosphate. It functions in the pathway isoprenoid biosynthesis; farnesyl diphosphate biosynthesis; farnesyl diphosphate from geranyl diphosphate and isopentenyl diphosphate: step 1/1. It participates in isoprenoid biosynthesis; geranyl diphosphate biosynthesis; geranyl diphosphate from dimethylallyl diphosphate and isopentenyl diphosphate: step 1/1. Catalyzes the sequential condensation of isopentenyl pyrophosphate with the allylic pyrophosphates, dimethylallyl pyrophosphate, and then with the resultant geranylpyrophosphate to the ultimate product farnesyl pyrophosphate. The protein is Farnesyl pyrophosphate synthase 1 (FPS1) of Lupinus albus (White lupine).